The primary structure comprises 565 residues: Heme/hemopexin transporter protein HuxB (565 aa).

The N-terminal stretch at methionine 1 to alanine 26 is a signal peptide. The 78-residue stretch at phenylalanine 73–glycine 150 folds into the POTRA domain.

The protein belongs to the TPS (TC 1.B.20) family.

It localises to the cell outer membrane. Its function is as follows. Likely functions in the release of soluble HxuA from the cell. Functionally, probable member of a two partner secretion pathway (TPS) in which it mediates the secretion of HuxA. The protein is Heme/hemopexin transporter protein HuxB (hxuB) of Haemophilus influenzae.